The following is a 158-amino-acid chain: Disulfide bond formation protein B (158 aa).

Topologically, residues 1–7 (MKNSRPV) are cytoplasmic. Residues 8–24 (LFAVALASLLLLAVALY) traverse the membrane as a helical segment. Residues 25–42 (LQHVENMLPCPLCVIQRY) lie on the Periplasmic side of the membrane. Cysteines 34 and 37 form a disulfide. Residues 43–57 (AFAAIALICLVTAFR) form a helical membrane-spanning segment. At 58-63 (TEVTAR) the chain is on the cytoplasmic side. Residues 64 to 81 (IGAALAALASLAGAGVAG) traverse the membrane as a helical segment. The Periplasmic segment spans residues 82–136 (WHIYIKAHPTVSCGIDPLETSLNTIPTAKLLPFLLQADGLCTTEYAPIMGLSIPQ). An intrachain disulfide couples C94 to C122. The chain crosses the membrane as a helical span at residues 137–155 (WALVWFIVIALFLLHTAFR). Residues 156–158 (KKS) lie on the Cytoplasmic side of the membrane.

It belongs to the DsbB family.

It localises to the cell inner membrane. Its function is as follows. Required for disulfide bond formation in some periplasmic proteins. Acts by oxidizing the DsbA protein. This chain is Disulfide bond formation protein B, found in Herminiimonas arsenicoxydans.